The following is an 892-amino-acid chain: Alanine--tRNA ligase (892 aa).

Residues His-577, His-581, Cys-680, and His-684 each coordinate Zn(2+).

The protein belongs to the class-II aminoacyl-tRNA synthetase family. Zn(2+) serves as cofactor.

It localises to the cytoplasm. It carries out the reaction tRNA(Ala) + L-alanine + ATP = L-alanyl-tRNA(Ala) + AMP + diphosphate. In terms of biological role, catalyzes the attachment of alanine to tRNA(Ala) in a two-step reaction: alanine is first activated by ATP to form Ala-AMP and then transferred to the acceptor end of tRNA(Ala). Also edits incorrectly charged Ser-tRNA(Ala) and Gly-tRNA(Ala) via its editing domain. The chain is Alanine--tRNA ligase from Arthrobacter sp. (strain FB24).